The primary structure comprises 378 residues: Aminomethyltransferase (378 aa).

It belongs to the GcvT family. In terms of assembly, the glycine cleavage system is composed of four proteins: P, T, L and H.

It carries out the reaction N(6)-[(R)-S(8)-aminomethyldihydrolipoyl]-L-lysyl-[protein] + (6S)-5,6,7,8-tetrahydrofolate = N(6)-[(R)-dihydrolipoyl]-L-lysyl-[protein] + (6R)-5,10-methylene-5,6,7,8-tetrahydrofolate + NH4(+). In terms of biological role, the glycine cleavage system catalyzes the degradation of glycine. In Acidobacterium capsulatum (strain ATCC 51196 / DSM 11244 / BCRC 80197 / JCM 7670 / NBRC 15755 / NCIMB 13165 / 161), this protein is Aminomethyltransferase.